The primary structure comprises 266 residues: Proteasome subunit alpha type-1 (266 aa).

It belongs to the peptidase T1A family. As to quaternary structure, the 26S proteasome consists of a 20S proteasome core and two 19S regulatory subunits. The 20S proteasome core is composed of 28 subunits that are arranged in four stacked rings, resulting in a barrel-shaped structure. The two end rings are each formed by seven alpha subunits, and the two central rings are each formed by seven beta subunits. The catalytic chamber with the active sites is on the inside of the barrel.

It localises to the cytoplasm. It is found in the nucleus. The proteasome is a multicatalytic proteinase complex which is characterized by its ability to cleave peptides with Arg, Phe, Tyr, Leu, and Glu adjacent to the leaving group at neutral or slightly basic pH. The proteasome has an ATP-dependent proteolytic activity. This is Proteasome subunit alpha type-1 from Trypanosoma brucei brucei.